Reading from the N-terminus, the 486-residue chain is MDLQIALFSLIPVILVFILLLKPKYKNLPPGPHPWPLIGNLPILFTNTEVPLHITLANMARTHGPIMILWLGTQPTVMASTAEAAMEILKTHDRIFSARHIRMSFRLKHHIKYSLVWSDCTDYWKLLRKIVRTEIFSPKMLQAQSHVREQKVAELIDFLRSKEGQVVKISQFVFGTLLNILGNVVFSKDVFVYGDETDKGGIQNLIREMLMIGAEPNVAEFYPSLEELDLQGLKKKCDERFIRVMKMWEGTVKERKANRNEESKDMLDVLLANDFNDAQINALFLETFGPGSETSSATIEWVIAELIKSPKEMAKVRKELNEVVGTSTIKESDLPQLPYLQACIKEAMRLHPAAPFLLPRRAAETCEVMGYTIPKNSQVLVNAYAIGRDPKSWKDPSTFWPERFLESDVDFHGAHYQFIPFGSGRRTCVGMPLATRTIPLIVGSLVHNYDFGLPGGNRPEDLKMNEMLSLTLAIDPSLCVVPKARA.

A helical transmembrane segment spans residues 6 to 21; the sequence is ALFSLIPVILVFILLL. Residue Cys428 participates in heme binding.

Belongs to the cytochrome P450 family. Requires heme as cofactor.

Its subcellular location is the endoplasmic reticulum membrane. The catalysed reaction is (S)-reticuline + reduced [NADPH--hemoprotein reductase] + O2 = (S)-corytuberine + oxidized [NADPH--hemoprotein reductase] + 2 H2O + 2 H(+). Inhibited by ketoconazole. In terms of biological role, cytochrome P450 that catalyzes an intramolecular C-C phenol coupling of (S)-reticuline in magnoflorine biosynthesis. Catalyzes the formation of (S)-corytuberine from (S)-reticuline, and also, with a lover efficiency, the 4'-O-demethylation of codamine to produce orientaline, and subsequent C-C-phenol coupling of orientaline. Can also use (R,S)-norreticuline, (R,S)-orientaline, (S)-N-methylcoclaurine and (S)-coclaurine as substrates, but not (R,S)-6-O-methyllaudanosoline, (R,S)-6-O-methylnorlaudanosoline, (R,S)-laudanine, (R,S)-norlaudanine, (R,S)-4'-O-methyllaudanosoline, (R,S)-pseudocodamine, (R,S)-norpseudocodamine, (R,S)-laudanosine, (R,S)-norlaudanosine, (R,S)-laudanosoline or (R,S)-norlaudanosoline. The protein is Corytuberine synthase of Coptis japonica (Japanese goldthread).